Consider the following 67-residue polypeptide: Conotoxin VnMMSK-03 (67 aa).

The first 20 residues, Met1–Ala20, serve as a signal peptide directing secretion. Positions Leu21 to Val50 are excised as a propeptide. 3 disulfide bridges follow: Cys53/Cys65, Cys54/Cys61, and Cys58/Cys64. Pro63 is subject to 4-hydroxyproline.

The protein belongs to the conotoxin M superfamily. In terms of tissue distribution, expressed by the venom duct.

The protein resides in the secreted. The chain is Conotoxin VnMMSK-03 from Conus ventricosus (Mediterranean cone).